The chain runs to 485 residues: Solute carrier family 35 member F4 (485 aa).

Polar residues-rich tracts occupy residues Ser32–Thr42 and Cys50–Leu64. Disordered regions lie at residues Ser32–Leu64 and Gln78–Glu111. Positions Arg88–Asp98 are enriched in basic and acidic residues. Polar residues predominate over residues Asp99–Glu111. A run of 10 helical transmembrane segments spans residues Ile129–Val149, Phe156–Val176, Ala217–Leu234, Asp241–Leu261, Phe265–Tyr285, Ile294–Phe314, Phe329–Tyr349, Phe359–Val381, Val383–Ala405, and Val414–Met434. An EamA domain is found at Leu225–Tyr285.

Belongs to the SLC35F solute transporter family.

It is found in the membrane. Putative solute transporter. The protein is Solute carrier family 35 member F4 (Slc35f4) of Mus musculus (Mouse).